The chain runs to 182 residues: Large ribosomal subunit protein uL5 (182 aa).

This sequence belongs to the universal ribosomal protein uL5 family. Part of the 50S ribosomal subunit; part of the 5S rRNA/L5/L18/L25 subcomplex. Contacts the 5S rRNA and the P site tRNA. Forms a bridge to the 30S subunit in the 70S ribosome.

Its function is as follows. This is one of the proteins that bind and probably mediate the attachment of the 5S RNA into the large ribosomal subunit, where it forms part of the central protuberance. In the 70S ribosome it contacts protein S13 of the 30S subunit (bridge B1b), connecting the 2 subunits; this bridge is implicated in subunit movement. Contacts the P site tRNA; the 5S rRNA and some of its associated proteins might help stabilize positioning of ribosome-bound tRNAs. The sequence is that of Large ribosomal subunit protein uL5 from Thermus aquaticus.